The sequence spans 330 residues: RNA polymerase sigma factor RpoS (330 aa).

A sigma-70 factor domain-1 region spans residues 56–89 (DATQLYLGEIGYSPLLTAEEEVYFARRALRGDVA). The tract at residues 94–164 (MIESNLRLVV…ERAIMNQTRT (71 aa)) is sigma-70 factor domain-2. An Interaction with polymerase core subunit RpoC motif is present at residues 118–121 (DLIE). Positions 174 to 249 (ELNVYLRTAR…DEKENGPEDT (76 aa)) are sigma-70 factor domain-3. Positions 262–315 (WLFELNAKQREVLARRFGLLGYEAATLEDVGREIGLTRERVRQIQVEGLRRLRE) are sigma-70 factor domain-4. Positions 288 to 307 (LEDVGREIGLTRERVRQIQV) form a DNA-binding region, H-T-H motif.

Belongs to the sigma-70 factor family. RpoS subfamily. Interacts with the RNA polymerase core enzyme.

The protein resides in the cytoplasm. In terms of biological role, sigma factors are initiation factors that promote the attachment of RNA polymerase to specific initiation sites and are then released. This sigma factor is the master transcriptional regulator of the stationary phase and the general stress response. This Salmonella dublin protein is RNA polymerase sigma factor RpoS.